Here is a 134-residue protein sequence, read N- to C-terminus: Large ribosomal subunit protein eL28 (134 aa).

Ser60 is subject to Phosphoserine.

This sequence belongs to the eukaryotic ribosomal protein eL28 family. As to quaternary structure, component of the large ribosomal subunit (LSU). Mature yeast ribosomes consist of a small (40S) and a large (60S) subunit. The 40S small subunit contains 1 molecule of ribosomal RNA (18S rRNA) and at least 33 different proteins. The large 60S subunit contains 3 rRNA molecules (25S, 5.8S and 5S rRNA) and at least 46 different proteins.

The protein localises to the cytoplasm. Component of the ribosome, a large ribonucleoprotein complex responsible for the synthesis of proteins in the cell. The small ribosomal subunit (SSU) binds messenger RNAs (mRNAs) and translates the encoded message by selecting cognate aminoacyl-transfer RNA (tRNA) molecules. The large subunit (LSU) contains the ribosomal catalytic site termed the peptidyl transferase center (PTC), which catalyzes the formation of peptide bonds, thereby polymerizing the amino acids delivered by tRNAs into a polypeptide chain. The nascent polypeptides leave the ribosome through a tunnel in the LSU and interact with protein factors that function in enzymatic processing, targeting, and the membrane insertion of nascent chains at the exit of the ribosomal tunnel. The polypeptide is Large ribosomal subunit protein eL28 (rpl44) (Schizosaccharomyces pombe (strain 972 / ATCC 24843) (Fission yeast)).